A 203-amino-acid chain; its full sequence is Probable flagellin 1 (203 aa).

Positions 1-6 (MRRRRG) are excised as a propeptide.

Belongs to the archaeal flagellin family.

It localises to the archaeal flagellum. In terms of biological role, flagellin is the subunit protein which polymerizes to form the filaments of archaeal flagella. This is Probable flagellin 1 (flaB1) from Aeropyrum pernix (strain ATCC 700893 / DSM 11879 / JCM 9820 / NBRC 100138 / K1).